Reading from the N-terminus, the 284-residue chain is Succinate dehydrogenase [ubiquinone] iron-sulfur subunit, mitochondrial (284 aa).

A mitochondrion-targeting transit peptide spans 1 to 26; that stretch reads MAAVVFSLRRSGPVFRLPGVLQVCRG. Residues 44–137 enclose the 2Fe-2S ferredoxin-type domain; the sequence is KKFAIYRWDP…VSKIYPLPHM (94 aa). [2Fe-2S] cluster is bound by residues Cys-97, Cys-102, Cys-105, and Cys-117. One can recognise a 4Fe-4S ferredoxin-type domain in the interval 180–210; sequence DRDKLDGLYECILCACCSTSCPSYWWNADKY. Positions 190, 193, and 196 each coordinate [4Fe-4S] cluster. Cys-200 lines the [3Fe-4S] cluster pocket. Residue Trp-205 participates in a ubiquinone binding. [3Fe-4S] cluster-binding residues include Cys-247 and Cys-253. Cys-257 provides a ligand contact to [4Fe-4S] cluster.

The protein belongs to the succinate dehydrogenase/fumarate reductase iron-sulfur protein family. As to quaternary structure, component of complex II composed of four subunits: the flavoprotein (FP) sdha, iron-sulfur protein (IP) sdhb, and a cytochrome b composed of sdhc and sdhd. Requires [2Fe-2S] cluster as cofactor. The cofactor is [3Fe-4S] cluster. It depends on [4Fe-4S] cluster as a cofactor.

Its subcellular location is the mitochondrion inner membrane. It carries out the reaction a quinone + succinate = fumarate + a quinol. The enzyme catalyses (R)-malate + a quinone = enol-oxaloacetate + a quinol. The catalysed reaction is (S)-malate + a quinone = enol-oxaloacetate + a quinol. Its pathway is carbohydrate metabolism; tricarboxylic acid cycle; fumarate from succinate (eukaryal route): step 1/1. With respect to regulation, enol-oxaloacetate inhibits the succinate dehydrogenase activity. Iron-sulfur protein (IP) subunit of the succinate dehydrogenase complex (mitochondrial respiratory chain complex II), responsible for transferring electrons from succinate to ubiquinone (coenzyme Q). SDH also oxidizes malate to the non-canonical enol form of oxaloacetate, enol-oxaloacetate. Enol-oxaloacetate, which is a potent inhibitor of the succinate dehydrogenase activity, is further isomerized into keto-oxaloacetate. The sequence is that of Succinate dehydrogenase [ubiquinone] iron-sulfur subunit, mitochondrial (sdhb) from Xenopus tropicalis (Western clawed frog).